The following is a 341-amino-acid chain: UDP-3-O-acylglucosamine N-acyltransferase (341 aa).

Catalysis depends on histidine 241, which acts as the Proton acceptor.

The protein belongs to the transferase hexapeptide repeat family. LpxD subfamily. In terms of assembly, homotrimer.

The catalysed reaction is a UDP-3-O-[(3R)-3-hydroxyacyl]-alpha-D-glucosamine + a (3R)-hydroxyacyl-[ACP] = a UDP-2-N,3-O-bis[(3R)-3-hydroxyacyl]-alpha-D-glucosamine + holo-[ACP] + H(+). The protein operates within bacterial outer membrane biogenesis; LPS lipid A biosynthesis. Functionally, catalyzes the N-acylation of UDP-3-O-acylglucosamine using 3-hydroxyacyl-ACP as the acyl donor. Is involved in the biosynthesis of lipid A, a phosphorylated glycolipid that anchors the lipopolysaccharide to the outer membrane of the cell. The sequence is that of UDP-3-O-acylglucosamine N-acyltransferase from Haemophilus ducreyi (strain 35000HP / ATCC 700724).